Here is a 207-residue protein sequence, read N- to C-terminus: Twist-related protein 1 (207 aa).

The span at 1–18 shows a compositional bias: low complexity; that stretch reads MMQDVSSSPVSPADDSLS. The segment at 1–110 is disordered; it reads MMQDVSSSPV…GGGSPQSYEE (110 aa). Residues 34–43 are compositionally biased toward basic residues; sequence RGGRKRRSSR. 2 stretches are compositionally biased toward gly residues: residues 46-65 and 80-104; these read AGGGAGPGGAAGGGVGGGDE and GCGGGGSAGGGGGGGGGGSSSGGGS. A bHLH domain is found at 113–164; it reads TQRVMANVRERQRTQSLNEAFAALRKIIPTLPSDKLSKIQTLKLAARYIDFL. Residues 166–196 are sufficient for transactivation activity; it reads QVLQSDELDSKMASCSYVAHERLSYAFSVWR.

As to quaternary structure, efficient DNA binding requires dimerization with another bHLH protein. Homodimer or heterodimer with E proteins such as TCF3. ID1 binds preferentially to TCF3 but does not interact efficiently with TWIST1 so ID1 levels control the amount of TCF3 available to dimerize with TWIST and thus determine the type of dimer formed.

The protein localises to the nucleus. Functionally, acts as a transcriptional regulator. Inhibits myogenesis by sequestrating E proteins, inhibiting trans-activation by MEF2, and inhibiting DNA-binding by MYOD1 through physical interaction. This interaction probably involves the basic domains of both proteins. Also represses expression of pro-inflammatory cytokines such as TNFA and IL1B. Regulates cranial suture patterning and fusion. Activates transcription as a heterodimer with E proteins. Regulates gene expression differentially, depending on dimer composition. Homodimers induce expression of FGFR2 and POSTN while heterodimers repress FGFR2 and POSTN expression and induce THBS1 expression. Heterodimerization is also required for osteoblast differentiation. Represses the activity of the circadian transcriptional activator: NPAS2-BMAL1 heterodimer. The sequence is that of Twist-related protein 1 (TWIST1) from Cebus capucinus (White-faced sapajou).